A 775-amino-acid polypeptide reads, in one-letter code: Transposon TX1 uncharacterized 82 kDa protein (775 aa).

Residues 1-10 (MGGNKKESYK) show a composition bias toward basic and acidic residues. Disordered stretches follow at residues 1-46 (MGGN…ASTS), 256-277 (PKGQIKTTAPVPAPSASNKTSY), and 535-565 (PIQDPADKTAGKDGEGGVVDTEEGSQTTSTV). Residues 35–46 (EPMSKSPIASTS) show a composition bias toward polar residues. A compositionally biased stretch (basic and acidic residues) spans 539-549 (PADKTAGKDGE).

The chain is Transposon TX1 uncharacterized 82 kDa protein from Xenopus laevis (African clawed frog).